Here is a 764-residue protein sequence, read N- to C-terminus: FAST kinase domain-containing protein 5, mitochondrial (764 aa).

The transit peptide at 1 to 27 (MAATLKSLKLVRYRAFCSPSAFGAVRS) directs the protein to the mitochondrion. Position 95 is a phosphoserine (Ser95). Position 507 is an N6-acetyllysine (Lys507). An RAP domain is found at 697 to 757 (LAVQFTNRNQ…RLEKLAFLHE (61 aa)).

It belongs to the FAST kinase family. Found in a complex with GRSF1, DDX28, DHX30 and FASTKD2. Associates with the 12S mitochondrial rRNA (12S mt-rRNA). In terms of tissue distribution, expression detected in spleen, thymus, testis, ovary, colon, heart, smooth muscle, kidney, brain, lung, liver and white adipose tissue with highest expression in heart, smooth muscle, liver and thyroid.

The protein localises to the mitochondrion matrix. It is found in the mitochondrion nucleoid. Plays an important role in the processing of non-canonical mitochondrial mRNA precursors. The protein is FAST kinase domain-containing protein 5, mitochondrial (FASTKD5) of Homo sapiens (Human).